The sequence spans 201 residues: Transgelin (201 aa).

At Ala2 the chain carries N-acetylalanine. In terms of domain architecture, Calponin-homology (CH) spans 24 to 137 (EELEERLVEW…RTLMALGSLA (114 aa)). At Ser166 the chain carries Phosphoserine. An N6-acetyllysine modification is found at Lys172. The stretch at 175 to 200 (IGLQMGSNRGASQAGMTGYGRPRQII) is one Calponin-like repeat. Ser181 is modified (phosphoserine). At Arg183 the chain carries Omega-N-methylarginine.

It belongs to the calponin family.

The protein localises to the cytoplasm. Actin cross-linking/gelling protein. Involved in calcium interactions and contractile properties of the cell that may contribute to replicative senescence. This Homo sapiens (Human) protein is Transgelin (TAGLN).